We begin with the raw amino-acid sequence, 223 residues long: ATP phosphoribosyltransferase (223 aa).

This sequence belongs to the ATP phosphoribosyltransferase family. Short subfamily. As to quaternary structure, heteromultimer composed of HisG and HisZ subunits.

The protein resides in the cytoplasm. It carries out the reaction 1-(5-phospho-beta-D-ribosyl)-ATP + diphosphate = 5-phospho-alpha-D-ribose 1-diphosphate + ATP. Its pathway is amino-acid biosynthesis; L-histidine biosynthesis; L-histidine from 5-phospho-alpha-D-ribose 1-diphosphate: step 1/9. Its function is as follows. Catalyzes the condensation of ATP and 5-phosphoribose 1-diphosphate to form N'-(5'-phosphoribosyl)-ATP (PR-ATP). Has a crucial role in the pathway because the rate of histidine biosynthesis seems to be controlled primarily by regulation of HisG enzymatic activity. In Desulfitobacterium hafniense (strain Y51), this protein is ATP phosphoribosyltransferase.